The following is a 65-amino-acid chain: Hainantoxin-X.2 (65 aa).

The N-terminal stretch at 1–20 (MNVKILVLVAVLCLVVSTHA) is a signal peptide. A propeptide spanning residues 21 to 37 (ERHSKTDMEDSPMIQER) is cleaved from the precursor. 3 disulfide bridges follow: cysteine 39–cysteine 56, cysteine 46–cysteine 59, and cysteine 55–cysteine 64.

It belongs to the neurotoxin 36 family. 02 subfamily. As to expression, expressed by the venom gland.

It localises to the secreted. Its function is as follows. Reversibly blocks N-type calcium channels (Cav2.2/CACNA1B) in rat dorsal root ganglion cells. Elicits no toxic symptoms in either vertebrates or invertebrates during a period of 48 hours post-injection, when it was assayed in vivo by direct injection into mice and cockroaches. This chain is Hainantoxin-X.2, found in Cyriopagopus hainanus (Chinese bird spider).